Reading from the N-terminus, the 378-residue chain is Tetraacyldisaccharide 4'-kinase (378 aa).

63 to 70 (AVGGAGKT) is an ATP binding site.

The protein belongs to the LpxK family.

It catalyses the reaction a lipid A disaccharide + ATP = a lipid IVA + ADP + H(+). It functions in the pathway glycolipid biosynthesis; lipid IV(A) biosynthesis; lipid IV(A) from (3R)-3-hydroxytetradecanoyl-[acyl-carrier-protein] and UDP-N-acetyl-alpha-D-glucosamine: step 6/6. Functionally, transfers the gamma-phosphate of ATP to the 4'-position of a tetraacyldisaccharide 1-phosphate intermediate (termed DS-1-P) to form tetraacyldisaccharide 1,4'-bis-phosphate (lipid IVA). This Anaeromyxobacter dehalogenans (strain 2CP-C) protein is Tetraacyldisaccharide 4'-kinase.